The following is a 336-amino-acid chain: Ribosomal RNA large subunit methyltransferase F (336 aa).

The protein belongs to the methyltransferase superfamily. METTL16/RlmF family.

The protein resides in the cytoplasm. It carries out the reaction adenosine(1618) in 23S rRNA + S-adenosyl-L-methionine = N(6)-methyladenosine(1618) in 23S rRNA + S-adenosyl-L-homocysteine + H(+). Its function is as follows. Specifically methylates the adenine in position 1618 of 23S rRNA. The chain is Ribosomal RNA large subunit methyltransferase F from Yersinia pestis bv. Antiqua (strain Nepal516).